A 125-amino-acid chain; its full sequence is Probable mercury resistance operon repressor (125 aa).

The HTH arsR-type domain occupies 15 to 109; sequence VPCTHPDTTA…LARCLAADNA (95 aa). The segment at residues 49–68 is a DNA-binding region (H-T-H motif); that stretch reads SAECVEHAGISQPRVSVHLS. Positions 69, 73, and 114 each coordinate Hg(2+).

Negatively regulates the mercuric reductase merA and the organolyase merB in the absence of mercuric ions. This Streptomyces lividans protein is Probable mercury resistance operon repressor (merR).